The following is a 376-amino-acid chain: MHCAQYTAGRCRSCQWLDKPYPQQLADKQHHLESLLAGHAVTQWLAPVFGRESAFRNKAKMVVSGSVERPLLGMLHRDGTPVDLCACPLYPPSFEPVFTVLKTFIARAGLTPYNVARKRGELKFLLLTESTYNGELMLRFVLRSETKLAQLIAALPWLQQQLPQLAVISANIQPVHMAILEGEREIPLTEQQALPERFNQVPLYIRPQSFFQTNPQVAASLYATARQWVQEHEVHSMWDLFCGVGGFGLHCAGPETQLTGIEINAEAIACARQSAEQLGLKNVSFAALDSTRFATAEAQIPELVLVNPPRRGIGRELCDYLSQMAPKFILYSSCNAETMAKDISLLAGYHIERVQLFDMFPHTSHYEVLTLLTLRR.

Residues Cys3, Cys11, Cys14, and Cys87 each coordinate [4Fe-4S] cluster. S-adenosyl-L-methionine contacts are provided by Gln212, Phe241, Glu262, and Asn307. Cys334 (nucleophile) is an active-site residue.

The protein belongs to the class I-like SAM-binding methyltransferase superfamily. RNA M5U methyltransferase family. RlmC subfamily.

It catalyses the reaction uridine(747) in 23S rRNA + S-adenosyl-L-methionine = 5-methyluridine(747) in 23S rRNA + S-adenosyl-L-homocysteine + H(+). Catalyzes the formation of 5-methyl-uridine at position 747 (m5U747) in 23S rRNA. This is 23S rRNA (uracil(747)-C(5))-methyltransferase RlmC from Yersinia pestis bv. Antiqua (strain Antiqua).